The primary structure comprises 652 residues: Phosphomethylpyrimidine synthase (652 aa).

Substrate-binding positions include Asn257, Met286, Tyr315, His351, 371–373 (SRG), 412–415 (DGLR), and Glu451. His455 serves as a coordination point for Zn(2+). Tyr478 provides a ligand contact to substrate. Residue His519 participates in Zn(2+) binding. Residues Cys599, Cys602, and Cys607 each coordinate [4Fe-4S] cluster.

It belongs to the ThiC family. In terms of assembly, homodimer. [4Fe-4S] cluster serves as cofactor.

It carries out the reaction 5-amino-1-(5-phospho-beta-D-ribosyl)imidazole + S-adenosyl-L-methionine = 4-amino-2-methyl-5-(phosphooxymethyl)pyrimidine + CO + 5'-deoxyadenosine + formate + L-methionine + 3 H(+). It participates in cofactor biosynthesis; thiamine diphosphate biosynthesis. Its function is as follows. Catalyzes the synthesis of the hydroxymethylpyrimidine phosphate (HMP-P) moiety of thiamine from aminoimidazole ribotide (AIR) in a radical S-adenosyl-L-methionine (SAM)-dependent reaction. The sequence is that of Phosphomethylpyrimidine synthase from Thiobacillus denitrificans (strain ATCC 25259 / T1).